A 795-amino-acid polypeptide reads, in one-letter code: Phenylalanine--tRNA ligase beta subunit (795 aa).

Positions 39 to 148 (AGSFNGVVVG…ADAPLGTDIR (110 aa)) constitute a tRNA-binding domain. One can recognise a B5 domain in the interval 401–476 (PKRATITLRR…RVYGYNNIPD (76 aa)). 4 residues coordinate Mg(2+): aspartate 454, aspartate 460, glutamate 463, and glutamate 464. Residues 701 to 794 (SRFPANRRDI…LKERFQASLR (94 aa)) form the FDX-ACB domain.

Belongs to the phenylalanyl-tRNA synthetase beta subunit family. Type 1 subfamily. Tetramer of two alpha and two beta subunits. Requires Mg(2+) as cofactor.

It localises to the cytoplasm. It carries out the reaction tRNA(Phe) + L-phenylalanine + ATP = L-phenylalanyl-tRNA(Phe) + AMP + diphosphate + H(+). The polypeptide is Phenylalanine--tRNA ligase beta subunit (Salmonella choleraesuis (strain SC-B67)).